Here is a 562-residue protein sequence, read N- to C-terminus: Glutamine--tRNA ligase (562 aa).

Residues proline 35 to histidine 45 carry the 'HIGH' region motif. Residues glutamate 36–asparagine 38 and histidine 42–serine 48 each bind ATP. Residues aspartate 68 and tyrosine 213 each coordinate L-glutamine. ATP-binding positions include threonine 232 and arginine 264–leucine 265. The short motif at isoleucine 271–arginine 275 is the 'KMSKS' region element.

Belongs to the class-I aminoacyl-tRNA synthetase family. As to quaternary structure, monomer.

The protein resides in the cytoplasm. It catalyses the reaction tRNA(Gln) + L-glutamine + ATP = L-glutaminyl-tRNA(Gln) + AMP + diphosphate. This chain is Glutamine--tRNA ligase, found in Neisseria meningitidis serogroup A / serotype 4A (strain DSM 15465 / Z2491).